Reading from the N-terminus, the 121-residue chain is Secretin (121 aa).

A signal peptide spans 1-18; it reads MAPRPLLLLLLLLGGSAA. The propeptide occupies 19–26; that stretch reads RPAPPRAR. The residue at position 54 (Val-54) is a Valine amide. Ser-58 carries the post-translational modification Phosphoserine. Positions 58 to 121 are excised as a propeptide; that stretch reads SEQDAENSMA…AAAEGTLRPR (64 aa).

The protein belongs to the glucagon family.

The protein resides in the secreted. In terms of biological role, hormone involved in different processes, such as regulation of the pH of the duodenal content, food intake and water homeostasis. Exerts its biological effects by binding to secretin receptor (SCTR), a G-protein coupled receptor expressed in the basolateral domain of several cells. Acts as a key gastrointestinal hormone by regulating the pH of the duodenal content. Secreted by S cells of the duodenum in the crypts of Lieberkuehn and regulates the pH of the duodenum by (1) inhibiting the secretion of gastric acid from the parietal cells of the stomach and (2) stimulating the production of bicarbonate (NaHCO(3)) from the ductal cells of the pancreas. Production of bicarbonate is essential to neutralize the pH and ensure no damage is done to the small intestine by the gastric acid. In addition to regulating the pH of the duodenal content, plays a central role in diet induced thermogenesis: acts as a non-sympathetic brown fat (BAT) activator mediating prandial thermogenesis, which consequentially induces satiation. Mechanistically, secretin released by the gut after a meal binds to secretin receptor (SCTR) in brown adipocytes, activating brown fat thermogenesis by stimulating lipolysis, which is sensed in the brain and promotes satiation. Also able to stimulate lipolysis in white adipocytes. Also plays an important role in cellular osmoregulation: released into the systemic circulation in response to hyperosmolality and acts at different levels in the hypothalamus, pituitary and kidney to regulate water homeostasis. Also plays a role in the central nervous system, possibly by acting as a neuropeptide hormone: required for hippocampal synaptic function and neural progenitor cells maintenance. This is Secretin from Homo sapiens (Human).